We begin with the raw amino-acid sequence, 287 residues long: Iodotyrosine deiodinase (287 aa).

Residues 15–34 (HWPSLFITLALIWIVKRLFF) traverse the membrane as a helical segment. Residues 96-100 (RRSIR), S125, and 125-126 (SG) each bind FMN. Positions 127, 154, 158, and 179 each coordinate 3,5-diiodo-L-tyrosine. 3-iodo-L-tyrosine-binding residues include A127, E154, Y158, and K179. FMN is bound by residues 235–237 (VTT) and R277.

It belongs to the nitroreductase family. Homodimer. The cofactor is FMN. Expressed in spermatocytes.

It localises to the cell membrane. The enzyme catalyses 2 iodide + L-tyrosine + 2 NADP(+) = 3,5-diiodo-L-tyrosine + 2 NADPH + H(+). It carries out the reaction iodide + L-tyrosine + NADP(+) = 3-iodo-L-tyrosine + NADPH. The catalysed reaction is 3-iodo-L-tyrosine + iodide + NADP(+) = 3,5-diiodo-L-tyrosine + NADPH + H(+). It catalyses the reaction L-tyrosine + chloride + NADP(+) = 3-chloro-L-tyrosine + NADPH. The enzyme catalyses bromide + L-tyrosine + NADP(+) = 3-bromo-L-tyrosine + NADPH. In terms of biological role, catalyzes the dehalogenation of halotyrosines such as 3-bromo-L-tyrosine, 3-chloro-L-tyrosine, 3-iodo-L-tyrosine and 3,5-diiodo-L-tyrosine. Activity towards 3-fluoro-L-tyrosine is weak. Important for male and female fertility. May be involved in maintaining the viability of sperm, both during development in the testes and storage in the female spermatheca. In Drosophila melanogaster (Fruit fly), this protein is Iodotyrosine deiodinase.